The primary structure comprises 410 residues: Peptidase T (410 aa).

Residue His77 participates in Zn(2+) binding. The active site involves Asp79. Asp140 is a binding site for Zn(2+). Catalysis depends on Glu174, which acts as the Proton acceptor. Zn(2+) is bound by residues Glu175, Asp197, and His379.

This sequence belongs to the peptidase M20B family. Zn(2+) serves as cofactor.

Its subcellular location is the cytoplasm. It catalyses the reaction Release of the N-terminal residue from a tripeptide.. Functionally, cleaves the N-terminal amino acid of tripeptides. The chain is Peptidase T from Desulfitobacterium hafniense (strain Y51).